Reading from the N-terminus, the 264-residue chain is MRQYLDLLQHVLDNGADRSDRTGTGTRSVFGYQMRFDLARGFPVTTTKKLHLKSIIHELLWFLAGDTNIKYLTDHGVTIWDEWADENGDLGPVYGRQWRSWPDGHGGSIDQIAGLLKEIRRNPQSRRLIVSAWNPAEVEAMALPPCHCLFQFYVSEGRLSCQLYQRSADIFLGVPFNIASYALLTLMVAQVTGLKPGDFVHTLGDAHLYSNHFEQAREQLQRTPRALPTMWINPEVKDLFAFRFEDFRLENYVADASIQAPIAV.

A dUMP-binding site is contributed by Arg21. His51 is a binding site for (6R)-5,10-methylene-5,6,7,8-tetrahydrofolate. 126–127 (RR) provides a ligand contact to dUMP. Residue Cys146 is the Nucleophile of the active site. DUMP-binding positions include 166–169 (RSAD), Asn177, and 207–209 (HLY). Asp169 contacts (6R)-5,10-methylene-5,6,7,8-tetrahydrofolate. Ala263 serves as a coordination point for (6R)-5,10-methylene-5,6,7,8-tetrahydrofolate.

This sequence belongs to the thymidylate synthase family. Bacterial-type ThyA subfamily. As to quaternary structure, homodimer.

The protein resides in the cytoplasm. The catalysed reaction is dUMP + (6R)-5,10-methylene-5,6,7,8-tetrahydrofolate = 7,8-dihydrofolate + dTMP. The protein operates within pyrimidine metabolism; dTTP biosynthesis. Functionally, catalyzes the reductive methylation of 2'-deoxyuridine-5'-monophosphate (dUMP) to 2'-deoxythymidine-5'-monophosphate (dTMP) while utilizing 5,10-methylenetetrahydrofolate (mTHF) as the methyl donor and reductant in the reaction, yielding dihydrofolate (DHF) as a by-product. This enzymatic reaction provides an intracellular de novo source of dTMP, an essential precursor for DNA biosynthesis. This is Thymidylate synthase from Mesorhizobium japonicum (strain LMG 29417 / CECT 9101 / MAFF 303099) (Mesorhizobium loti (strain MAFF 303099)).